Consider the following 257-residue polypeptide: Protein orai-2 (257 aa).

4 consecutive transmembrane segments (helical) span residues Thr-67 to Leu-84, Leu-95 to Ile-115, Leu-149 to Leu-169, and Ala-199 to Ile-219.

Belongs to the Orai family.

The protein resides in the membrane. Ca(2+) release-activated Ca(2+)-like (CRAC-like) channel subunit which mediates Ca(2+) influx and increase in Ca(2+)-selective current by synergy with the Ca(2+) sensor, STIM1. This Gallus gallus (Chicken) protein is Protein orai-2 (ORAI2).